We begin with the raw amino-acid sequence, 392 residues long: Lipid-A-disaccharide synthase (392 aa).

This sequence belongs to the LpxB family.

It carries out the reaction a lipid X + a UDP-2-N,3-O-bis[(3R)-3-hydroxyacyl]-alpha-D-glucosamine = a lipid A disaccharide + UDP + H(+). The protein operates within bacterial outer membrane biogenesis; LPS lipid A biosynthesis. Its function is as follows. Condensation of UDP-2,3-diacylglucosamine and 2,3-diacylglucosamine-1-phosphate to form lipid A disaccharide, a precursor of lipid A, a phosphorylated glycolipid that anchors the lipopolysaccharide to the outer membrane of the cell. This is Lipid-A-disaccharide synthase from Prochlorococcus marinus (strain MIT 9313).